A 278-amino-acid chain; its full sequence is Undecaprenyl-diphosphatase (278 aa).

A run of 8 helical transmembrane segments spans residues 3–23 (YILIGVILGIVQGISEWIPIS), 42–62 (VAYSFGLFMEIGTIAAAIIYF), 88–108 (FLVIVTIITGLMGVPLYLFVI), 112–132 (ILGLPMTVLGVVLLIDGIIIY), 152–172 (IIIVGIAQGLAALPGVSRSGI), 190–210 (LSFISLIPAALGAIGVTVLFS), 225–245 (GLLISIVVATFVSIFFINALL), and 253–273 (VVVLVIILGIIAIISGILSGI).

Belongs to the UppP family.

It is found in the cell membrane. The enzyme catalyses di-trans,octa-cis-undecaprenyl diphosphate + H2O = di-trans,octa-cis-undecaprenyl phosphate + phosphate + H(+). In terms of biological role, catalyzes the dephosphorylation of undecaprenyl diphosphate (UPP). This chain is Undecaprenyl-diphosphatase, found in Saccharolobus islandicus (strain M.16.4 / Kamchatka #3) (Sulfolobus islandicus).